The following is a 415-amino-acid chain: Serine hydroxymethyltransferase 3 (415 aa).

(6S)-5,6,7,8-tetrahydrofolate-binding positions include L122 and 126–128 (GHL). K230 is subject to N6-(pyridoxal phosphate)lysine.

Belongs to the SHMT family. Homodimer. Pyridoxal 5'-phosphate is required as a cofactor.

It is found in the cytoplasm. It catalyses the reaction (6R)-5,10-methylene-5,6,7,8-tetrahydrofolate + glycine + H2O = (6S)-5,6,7,8-tetrahydrofolate + L-serine. Its pathway is one-carbon metabolism; tetrahydrofolate interconversion. It functions in the pathway amino-acid biosynthesis; glycine biosynthesis; glycine from L-serine: step 1/1. Catalyzes the reversible interconversion of serine and glycine with tetrahydrofolate (THF) serving as the one-carbon carrier. This reaction serves as the major source of one-carbon groups required for the biosynthesis of purines, thymidylate, methionine, and other important biomolecules. Also exhibits THF-independent aldolase activity toward beta-hydroxyamino acids, producing glycine and aldehydes, via a retro-aldol mechanism. This Burkholderia lata (strain ATCC 17760 / DSM 23089 / LMG 22485 / NCIMB 9086 / R18194 / 383) protein is Serine hydroxymethyltransferase 3.